Consider the following 214-residue polypeptide: MLKKIIILFLGVFVLSGCTDSFRGYFQKSANNRLVDSKGFKGGKRKPLYNNKYISLAKKNIVEDNLDDPEDDDDDYDNPLRGEQIDPVKRNREIYLKMIRRDMEKYKAESGESSDDDDMTLSKANKKVRKDNTDKERKMQEELDQIKAMLRETKRDISKYTCPNATANQNYVPPVSNYEPVAPVKNNKPYNNNSKVKQKFIREDDDYSSNACSI.

The signal sequence occupies residues 1–17; the sequence is MLKKIIILFLGVFVLSG. A lipid anchor (N-palmitoyl cysteine) is attached at cysteine 18. The S-diacylglycerol cysteine moiety is linked to residue cysteine 18. The span at 64–77 shows a compositional bias: acidic residues; sequence DNLDDPEDDDDDYD. Disordered stretches follow at residues 64-83, 106-138, and 166-197; these read DNLDDPEDDDDDYDNPLRGE, YKAESGESSDDDDMTLSKANKKVRKDNTDKERK, and TANQNYVPPVSNYEPVAPVKNNKPYNNNSKVK. Positions 120–162 form a coiled coil; sequence TLSKANKKVRKDNTDKERKMQEELDQIKAMLRETKRDISKYTC.

The protein localises to the cell membrane. This is an uncharacterized protein from Rickettsia bellii (strain RML369-C).